A 910-amino-acid polypeptide reads, in one-letter code: Eukaryotic translation initiation factor 3 subunit C (910 aa).

Residues 1-21 (MSRFFANGSESESESSEEEIQ) form a disordered region. The span at 11-20 (SESESSEEEI) shows a compositional bias: acidic residues. Phosphoserine occurs at positions 34, 165, 176, and 185. A disordered region spans residues 157-281 (FREAPDQESE…KRAEDDEDGE (125 aa)). Residues 162-186 (DQESEAEDEVVALESDGGDAGDDSD) are compositionally biased toward acidic residues. Residues 193–207 (EAAPKAVKSAPAKAA) show a composition bias toward low complexity. A compositionally biased stretch (acidic residues) spans 209–235 (ADDDDSDDSIDWDSDSESETESSDDEN). Residues 240 to 268 (MRERFLKRTTEKEEKDDDKRKDKRKEQKT) show a composition bias toward basic and acidic residues. The PCI domain occupies 639-815 (FHMHINLELL…ETVGMHRSEP (177 aa)). Residues 847–910 (FFQRGNMGNR…QQQVQTIDEE (64 aa)) are disordered. Low complexity predominate over residues 862 to 874 (NRNQNNQGGNWLG). Residues 882 to 891 (RNRNQRGHHK) are compositionally biased toward basic residues. Positions 895–910 (DRQQQQQQQVQTIDEE) are enriched in low complexity.

The protein belongs to the eIF-3 subunit C family. As to quaternary structure, component of the eukaryotic translation initiation factor 3 (eIF-3) complex. The eIF-3 complex interacts with pix.

It is found in the cytoplasm. Functionally, component of the eukaryotic translation initiation factor 3 (eIF-3) complex, which is involved in protein synthesis of a specialized repertoire of mRNAs and, together with other initiation factors, stimulates binding of mRNA and methionyl-tRNAi to the 40S ribosome. The eIF-3 complex specifically targets and initiates translation of a subset of mRNAs involved in cell proliferation. This is Eukaryotic translation initiation factor 3 subunit C from Drosophila sechellia (Fruit fly).